We begin with the raw amino-acid sequence, 624 residues long: Basal cell adhesion molecule (624 aa).

The signal sequence occupies residues 1–25 (MEPPDARAGLLWLTLLLSGYSGAQA). 2 consecutive Ig-like V-type domains span residues 26 to 136 (ELHV…SSVR) and 141 to 251 (PEAT…HTFR). Topologically, residues 26 to 543 (ELHVSVPPRV…GSVAPQTAQA (518 aa)) are extracellular. Cystine bridges form between Cys-47–Cys-119, Cys-166–Cys-231, and Cys-285–Cys-331. Ig-like C2-type domains lie at 268-343 (PSTT…EEVQ), 357-436 (PLEL…QSFQ), and 443-534 (PELK…FHFG). Residues Asn-315, Asn-371, and Asn-378 are each glycosylated (N-linked (GlcNAc...) asparagine). 2 cysteine pairs are disulfide-bonded: Cys-379/Cys-419 and Cys-468/Cys-518. Residues 477-497 (KLTWSQRGDTTPAEPPFEGRG) form a disordered region. A helical membrane pass occupies residues 544 to 564 (GVAVMAVAVSVGLLLLVVAAF). Topologically, residues 565–624 (YCMRRKGRPGCCQRAEKGAPPAREPELSHSGSERPEHTGLLMGGPSGGGRGGNGGFGDEC) are cytoplasmic. Residues 574 to 624 (GCCQRAEKGAPPAREPELSHSGSERPEHTGLLMGGPSGGGRGGNGGFGDEC) form a disordered region. The segment covering 587-601 (REPELSHSGSERPEH) has biased composition (basic and acidic residues). Ser-592, Ser-594, and Ser-596 each carry phosphoserine. Positions 605-624 (LMGGPSGGGRGGNGGFGDEC) are enriched in gly residues.

As to quaternary structure, homodimer. Interacts with ITGA4:ITGB1. Interacts with spectrins SPTA1 and SPTB1.

Its subcellular location is the cell membrane. In terms of biological role, transmembrane glycoprotein that functions as both a receptor and an adhesion molecule playing a crucial role in cell adhesion, motility, migration and invasion. Extracellular domain enables binding to extracellular matrix proteins, such as laminin, integrin and other ligands while its intracellular domain interacts with cytoskeletal proteins like hemoglobin, facilitating cell signal transduction. Serves as a receptor for laminin alpha-5/LAMA5 to promote cell adhesion. Mechanistically, JAK2 induces BCAM phosphorylation and activates its adhesion to laminin by stimulating a Rap1/AKT signaling pathway in the absence of EPOR. This chain is Basal cell adhesion molecule (Bcam), found in Rattus norvegicus (Rat).